The following is a 365-amino-acid chain: Cobalt-precorrin-5B C(1)-methyltransferase (365 aa).

It belongs to the CbiD family.

The enzyme catalyses Co-precorrin-5B + S-adenosyl-L-methionine = Co-precorrin-6A + S-adenosyl-L-homocysteine. It participates in cofactor biosynthesis; adenosylcobalamin biosynthesis; cob(II)yrinate a,c-diamide from sirohydrochlorin (anaerobic route): step 6/10. Its function is as follows. Catalyzes the methylation of C-1 in cobalt-precorrin-5B to form cobalt-precorrin-6A. The chain is Cobalt-precorrin-5B C(1)-methyltransferase from Pseudomonas fluorescens (strain ATCC BAA-477 / NRRL B-23932 / Pf-5).